We begin with the raw amino-acid sequence, 219 residues long: Casein kinase II subunit beta' (219 aa).

Position 2 is a phosphothreonine; by autocatalysis (T2).

The protein belongs to the casein kinase 2 subunit beta family. As to quaternary structure, tetramer of two alpha and two beta' subunits. Post-translationally, phosphorylated by alpha subunit.

Functionally, participates in Wnt signaling. Plays a complex role in regulating the basal catalytic activity of the alpha subunit. The protein is Casein kinase II subunit beta' (CkIIbeta2) of Drosophila melanogaster (Fruit fly).